A 185-amino-acid polypeptide reads, in one-letter code: dTTP/UTP pyrophosphatase (185 aa).

D64 acts as the Proton acceptor in catalysis.

The protein belongs to the Maf family. YhdE subfamily. A divalent metal cation serves as cofactor.

It localises to the cytoplasm. The catalysed reaction is dTTP + H2O = dTMP + diphosphate + H(+). It carries out the reaction UTP + H2O = UMP + diphosphate + H(+). In terms of biological role, nucleoside triphosphate pyrophosphatase that hydrolyzes dTTP and UTP. May have a dual role in cell division arrest and in preventing the incorporation of modified nucleotides into cellular nucleic acids. This is dTTP/UTP pyrophosphatase from Leptospira borgpetersenii serovar Hardjo-bovis (strain JB197).